The following is a 493-amino-acid chain: Glutamyl-tRNA(Gln) amidotransferase subunit A (493 aa).

Residues Lys78 and Ser158 each act as charge relay system in the active site. Residue Ser182 is the Acyl-ester intermediate of the active site.

It belongs to the amidase family. GatA subfamily. As to quaternary structure, heterotrimer of A, B and C subunits.

The catalysed reaction is L-glutamyl-tRNA(Gln) + L-glutamine + ATP + H2O = L-glutaminyl-tRNA(Gln) + L-glutamate + ADP + phosphate + H(+). Its function is as follows. Allows the formation of correctly charged Gln-tRNA(Gln) through the transamidation of misacylated Glu-tRNA(Gln) in organisms which lack glutaminyl-tRNA synthetase. The reaction takes place in the presence of glutamine and ATP through an activated gamma-phospho-Glu-tRNA(Gln). The polypeptide is Glutamyl-tRNA(Gln) amidotransferase subunit A (Rickettsia canadensis (strain McKiel)).